Consider the following 386-residue polypeptide: Succinate--CoA ligase [ADP-forming] subunit beta (386 aa).

Residues 9-244 enclose the ATP-grasp domain; that stretch reads KDLLASYDVP…PSQENVRDVL (236 aa). ATP-binding positions include K46, 53–55, V102, and E107; that span reads GRG. Positions 199 and 213 each coordinate Mg(2+). Substrate-binding positions include N264 and 321–323; that span reads GIM.

The protein belongs to the succinate/malate CoA ligase beta subunit family. In terms of assembly, heterotetramer of two alpha and two beta subunits. Mg(2+) serves as cofactor.

The catalysed reaction is succinate + ATP + CoA = succinyl-CoA + ADP + phosphate. It carries out the reaction GTP + succinate + CoA = succinyl-CoA + GDP + phosphate. It participates in carbohydrate metabolism; tricarboxylic acid cycle; succinate from succinyl-CoA (ligase route): step 1/1. Functionally, succinyl-CoA synthetase functions in the citric acid cycle (TCA), coupling the hydrolysis of succinyl-CoA to the synthesis of either ATP or GTP and thus represents the only step of substrate-level phosphorylation in the TCA. The beta subunit provides nucleotide specificity of the enzyme and binds the substrate succinate, while the binding sites for coenzyme A and phosphate are found in the alpha subunit. This Chlamydia pneumoniae (Chlamydophila pneumoniae) protein is Succinate--CoA ligase [ADP-forming] subunit beta.